A 54-amino-acid chain; its full sequence is Ovomucoid (54 aa).

A Kazal-like domain is found at Val4 to Cys54. Disulfide bonds link Cys6-Cys36, Cys14-Cys33, and Cys22-Cys54. N-linked (GlcNAc...) asparagine glycosylation is present at Asn43.

The protein resides in the secreted. In Pavo muticus (Green peafowl), this protein is Ovomucoid.